The primary structure comprises 95 residues: Large ribosomal subunit protein eL37z (95 aa).

Zn(2+) contacts are provided by C19, C22, C34, and C37. The C4-type zinc finger occupies 19–37; it reads CVRCGRRSFHIQKSRCSAC.

It belongs to the eukaryotic ribosomal protein eL37 family. Zn(2+) serves as cofactor.

Binds to the 23S rRNA. The sequence is that of Large ribosomal subunit protein eL37z (RPL37A) from Arabidopsis thaliana (Mouse-ear cress).